A 1457-amino-acid chain; its full sequence is ABC transporter G family member 36 (1457 aa).

Residues Arg14 to Asp43 form a disordered region. Residues Arg28 to Arg39 are compositionally biased toward basic and acidic residues. Residues Gly164–Asp437 form the ABC transporter 1 domain. An ATP-binding site is contributed by Gly197–Thr204. Residues Glu515–Leu728 form the ABC transmembrane type-2 1 domain. A run of 7 helical transmembrane segments spans residues Phe533–Phe553, Ser565–Phe585, Ile621–Phe641, Leu653–Ala673, Ile677–Ile697, Trp706–Asn726, and Ile765–Leu785. The interval Ser821 to Asp841 is disordered. The ABC transporter 2 domain occupies Leu860 to Pro1112. Gly905–Thr912 is a binding site for ATP. The region spanning Thr1185–Phe1399 is the ABC transmembrane type-2 2 domain. Transmembrane regions (helical) follow at residues Phe1209 to Lys1229, Tyr1244 to Val1264, Ile1292 to Phe1312, Phe1319 to Met1339, Ile1349 to Ile1369, Trp1380 to Gly1400, and Trp1429 to Ile1449.

It belongs to the ABC transporter superfamily. ABCG family. PDR (TC 3.A.1.205) subfamily.

The protein resides in the membrane. Functionally, may be a general defense protein. This is ABC transporter G family member 36 from Oryza sativa subsp. japonica (Rice).